The primary structure comprises 454 residues: Allantoinase (454 aa).

Histidine 60, histidine 62, lysine 147, histidine 183, histidine 239, and aspartate 312 together coordinate Zn(2+). N6-carboxylysine is present on lysine 147.

Belongs to the metallo-dependent hydrolases superfamily. Allantoinase family. Homotetramer. Requires Zn(2+) as cofactor. Carboxylation allows a single lysine to coordinate two zinc ions.

The catalysed reaction is (S)-allantoin + H2O = allantoate + H(+). Its pathway is nitrogen metabolism; (S)-allantoin degradation; allantoate from (S)-allantoin: step 1/1. Catalyzes the conversion of allantoin (5-ureidohydantoin) to allantoic acid by hydrolytic cleavage of the five-member hydantoin ring. This chain is Allantoinase, found in Bacillus velezensis (strain DSM 23117 / BGSC 10A6 / LMG 26770 / FZB42) (Bacillus amyloliquefaciens subsp. plantarum).